The sequence spans 301 residues: tRNA dimethylallyltransferase 1 (301 aa).

11-18 (GPTGVGKT) lines the ATP pocket. Position 13–18 (13–18 (TGVGKT)) interacts with substrate. The interaction with substrate tRNA stretch occupies residues 36 to 39 (DSRQ).

The protein belongs to the IPP transferase family. In terms of assembly, monomer. Mg(2+) is required as a cofactor.

The enzyme catalyses adenosine(37) in tRNA + dimethylallyl diphosphate = N(6)-dimethylallyladenosine(37) in tRNA + diphosphate. Its function is as follows. Catalyzes the transfer of a dimethylallyl group onto the adenine at position 37 in tRNAs that read codons beginning with uridine, leading to the formation of N6-(dimethylallyl)adenosine (i(6)A). This is tRNA dimethylallyltransferase 1 from Bacteroides fragilis (strain YCH46).